The chain runs to 1050 residues: NAD-specific glutamate dehydrogenase (1050 aa).

The interval 1 to 39 (MDSPSAPVPAHKLVDRLKDQTPRHPSPQPTHVSYPKVNG) is disordered. Basic and acidic residues predominate over residues 12–22 (KLVDRLKDQTP). Lysine 594 is a catalytic residue.

The protein belongs to the Glu/Leu/Phe/Val dehydrogenases family. Homotetramer.

The enzyme catalyses L-glutamate + NAD(+) + H2O = 2-oxoglutarate + NH4(+) + NADH + H(+). The polypeptide is NAD-specific glutamate dehydrogenase (gdh-1) (Neurospora crassa (strain ATCC 24698 / 74-OR23-1A / CBS 708.71 / DSM 1257 / FGSC 987)).